Consider the following 400-residue polypeptide: Phosphoglycerate kinase (400 aa).

Residues 24-26, R39, 62-65, R121, and R154 each bind substrate; these read DFN and HFGR. ATP-binding positions include K205, G296, E327, and 356–359; that span reads GGDS.

It belongs to the phosphoglycerate kinase family. In terms of assembly, monomer.

The protein localises to the cytoplasm. The catalysed reaction is (2R)-3-phosphoglycerate + ATP = (2R)-3-phospho-glyceroyl phosphate + ADP. Its pathway is carbohydrate degradation; glycolysis; pyruvate from D-glyceraldehyde 3-phosphate: step 2/5. This Rippkaea orientalis (strain PCC 8801 / RF-1) (Cyanothece sp. (strain PCC 8801)) protein is Phosphoglycerate kinase.